The following is a 165-amino-acid chain: Putative protein FAM86C1P (165 aa).

The protein belongs to the class I-like SAM-binding methyltransferase superfamily. EEF2KMT family. In terms of assembly, interacts with EEF2KMT.

This is Putative protein FAM86C1P from Homo sapiens (Human).